Reading from the N-terminus, the 615-residue chain is Ankyrin repeat and LEM domain-containing protein 1 (615 aa).

ANK repeat units follow at residues 39-71 (DGAA…DPNA), 75-104 (EALT…DPAL), and 108-137 (DGLR…RTRT). The segment at 138–210 (RTRIGAETQE…DKHGSSASPP (73 aa)) is disordered. The short motif at 271 to 280 (LNARLQALTL) is the Nuclear export signal element. Polar residues predominate over residues 283–294 (PNAAGFQSSPSS). A disordered region spans residues 283–315 (PNAAGFQSSPSSMPLLDRSPAHSPPRTPTPGAS). Positions 355–399 (HLPVSTVSDLELLKGLRALGENPHPITPFTRQLYHQQLEEAQIAP) constitute an LEM domain. Positions 448 to 566 (KSSFTYLLLD…ALGIQTLTNQ (119 aa)) constitute a GIY-YIG domain. The short motif at 579-586 (PPARRRRL) is the Nuclear localization signal element.

Interacts (via LEM domain) with BANF1; the interaction may favor BANF1 dimerization. Expression is predominant in adult bone marrow.

Its subcellular location is the cytoplasm. The protein resides in the nucleus. Endonuclease that probably plays a role in the DNA damage response and DNA repair. The sequence is that of Ankyrin repeat and LEM domain-containing protein 1 (ANKLE1) from Homo sapiens (Human).